The sequence spans 397 residues: 3-ketoacyl-CoA thiolase, mitochondrial (397 aa).

The transit peptide at 1 to 16 (MALLRGVFIVAAKRTP) directs the protein to the mitochondrion; not cleaved. Position 25 is an N6-acetyllysine; alternate (K25). An N6-succinyllysine; alternate modification is found at K25. C92 serves as the catalytic Acyl-thioester intermediate. T119 is subject to Phosphothreonine. At S121 the chain carries Phosphoserine. The residue at position 127 (Y127) is a Phosphotyrosine. A Phosphothreonine modification is found at T136. Residue K137 is modified to N6-acetyllysine; alternate. K137 bears the N6-succinyllysine; alternate mark. S140 is subject to Phosphoserine. Residues K143, K171, K191, and K209 each carry the N6-acetyllysine; alternate modification. An N6-succinyllysine; alternate mark is found at K143, K171, K191, and K209. N6-succinyllysine is present on residues K212 and K214. CoA-binding residues include R224 and T227. At K234 the chain carries N6-acetyllysine; alternate. The residue at position 234 (K234) is an N6-succinyllysine; alternate. K240 carries the post-translational modification N6-succinyllysine. N6-acetyllysine is present on K241. S251 is a CoA binding site. N6-acetyllysine is present on residues K269 and K270. At K305 the chain carries N6-acetyllysine; alternate. K305 carries the post-translational modification N6-succinyllysine; alternate. Residue S310 is modified to Phosphoserine. K312 is subject to N6-acetyllysine; alternate. An N6-succinyllysine; alternate modification is found at K312. S333 is modified (phosphoserine). Residues K340 and K375 each carry the N6-acetyllysine modification. C382 functions as the Proton donor/acceptor in the catalytic mechanism.

It belongs to the thiolase-like superfamily. Thiolase family. As to quaternary structure, homotetramer. Interacts with BNIP3.

It localises to the mitochondrion. The enzyme catalyses an acyl-CoA + acetyl-CoA = a 3-oxoacyl-CoA + CoA. The catalysed reaction is 2 acetyl-CoA = acetoacetyl-CoA + CoA. It catalyses the reaction acetyl-CoA + H2O = acetate + CoA + H(+). It carries out the reaction propanoyl-CoA + H2O = propanoate + CoA + H(+). The enzyme catalyses butanoyl-CoA + H2O = butanoate + CoA + H(+). The catalysed reaction is hexanoyl-CoA + H2O = hexanoate + CoA + H(+). It catalyses the reaction octanoyl-CoA + H2O = octanoate + CoA + H(+). It carries out the reaction decanoyl-CoA + H2O = decanoate + CoA + H(+). The enzyme catalyses dodecanoyl-CoA + H2O = dodecanoate + CoA + H(+). The catalysed reaction is tetradecanoyl-CoA + H2O = tetradecanoate + CoA + H(+). It catalyses the reaction hexadecanoyl-CoA + H2O = hexadecanoate + CoA + H(+). It participates in lipid metabolism; fatty acid beta-oxidation. Functionally, in the production of energy from fats, this is one of the enzymes that catalyzes the last step of the mitochondrial beta-oxidation pathway, an aerobic process breaking down fatty acids into acetyl-CoA. Using free coenzyme A/CoA, catalyzes the thiolytic cleavage of medium- to long-chain unbranched 3-oxoacyl-CoAs into acetyl-CoA and a fatty acyl-CoA shortened by two carbon atoms. Also catalyzes the condensation of two acetyl-CoA molecules into acetoacetyl-CoA and could be involved in the production of ketone bodies. Also displays hydrolase activity on various fatty acyl-CoAs. Thereby, could be responsible for the production of acetate in a side reaction to beta-oxidation. Abolishes BNIP3-mediated apoptosis and mitochondrial damage. This Bos taurus (Bovine) protein is 3-ketoacyl-CoA thiolase, mitochondrial (ACAA2).